A 205-amino-acid chain; its full sequence is MEVQLQELVDKIKKDGVAAADEKAAEIIRAAEEKAKNIIEKAEAEAQESVKKAEAEALRFQKAAESSIDQAGRNTLISFRQGLLNELNAIIKAETAKNYDSAVLKNLIPEAVKGWVKTGNTENLSVILADKDLKELESSLSAALKDHIAKGMELKADSKIAGGFRIGTKDGSAYYDFSAEAVADLFSSYLSPKTAEILKNAAKEL.

Belongs to the V-ATPase E subunit family.

Its function is as follows. Produces ATP from ADP in the presence of a proton gradient across the membrane. This is V-type ATP synthase subunit E from Treponema denticola (strain ATCC 35405 / DSM 14222 / CIP 103919 / JCM 8153 / KCTC 15104).